Here is a 442-residue protein sequence, read N- to C-terminus: Histidinol dehydrogenase (442 aa).

The segment at 1–20 (MLNVTDLRGQTPSKSDIRRA) is disordered. NAD(+)-binding residues include Tyr129, Gln193, and Asn218. Residues Thr241, Gln263, and His266 each contribute to the substrate site. Zn(2+)-binding residues include Gln263 and His266. Residues Glu332 and His333 each act as proton acceptor in the active site. Substrate-binding residues include His333, Asp366, Glu420, and His425. Asp366 serves as a coordination point for Zn(2+). His425 contributes to the Zn(2+) binding site.

Belongs to the histidinol dehydrogenase family. The cofactor is Zn(2+).

The catalysed reaction is L-histidinol + 2 NAD(+) + H2O = L-histidine + 2 NADH + 3 H(+). It participates in amino-acid biosynthesis; L-histidine biosynthesis; L-histidine from 5-phospho-alpha-D-ribose 1-diphosphate: step 9/9. Functionally, catalyzes the sequential NAD-dependent oxidations of L-histidinol to L-histidinaldehyde and then to L-histidine. The protein is Histidinol dehydrogenase of Corynebacterium glutamicum (strain ATCC 13032 / DSM 20300 / JCM 1318 / BCRC 11384 / CCUG 27702 / LMG 3730 / NBRC 12168 / NCIMB 10025 / NRRL B-2784 / 534).